A 352-amino-acid polypeptide reads, in one-letter code: Ion-translocating oxidoreductase complex subunit D (352 aa).

Helical transmembrane passes span 20 to 40 (IMLL…WFFG), 42 to 62 (GTLV…ALVL), 89 to 109 (IPPL…VIIA), and 123 to 143 (PAMI…TSWL). T187 carries the post-translational modification FMN phosphoryl threonine. A run of 5 helical transmembrane segments spans residues 214 to 234 (ILAG…GVWL), 242 to 262 (WHIP…GWLF), 267 to 287 (LASP…FFIL), 301 to 321 (LIFG…GGYP), and 322 to 342 (DGVA…DYYT).

This sequence belongs to the NqrB/RnfD family. In terms of assembly, the complex is composed of six subunits: RsxA, RsxB, RsxC, RsxD, RsxE and RsxG. The cofactor is FMN.

The protein resides in the cell inner membrane. Part of a membrane-bound complex that couples electron transfer with translocation of ions across the membrane. Required to maintain the reduced state of SoxR. The protein is Ion-translocating oxidoreductase complex subunit D of Escherichia coli O17:K52:H18 (strain UMN026 / ExPEC).